A 218-amino-acid polypeptide reads, in one-letter code: UPF0502 protein Shewana3_1622 (218 aa).

It belongs to the UPF0502 family.

The sequence is that of UPF0502 protein Shewana3_1622 from Shewanella sp. (strain ANA-3).